Reading from the N-terminus, the 304-residue chain is Voltage-dependent anion channel-forming protein YneE (304 aa).

The next 4 membrane-spanning stretches (helical) occupy residues 28–48 (LLLN…YTHL), 50–70 (IKFT…FLGF), 194–214 (VLAG…TLIL), and 220–240 (LFCI…TPFI).

This sequence belongs to the anion channel-forming bestrophin (TC 1.A.46) family.

Its subcellular location is the cell membrane. This is Voltage-dependent anion channel-forming protein YneE (yneE) from Escherichia coli (strain K12).